The primary structure comprises 2074 residues: Cell adhesion molecule Dscam2 (2074 aa).

Positions methionine 1 to serine 21 are cleaved as a signal peptide. Residues glutamate 22 to asparagine 1619 are Extracellular-facing. 8 consecutive Ig-like C2-type domains span residues proline 31–serine 120, proline 238–threonine 326, proline 330–glutamine 417, proline 422–asparagine 516, proline 521–threonine 607, proline 612–threonine 698, proline 707–asparagine 802, and proline 805–glutamine 902. Intrachain disulfides connect cysteine 53–cysteine 109, cysteine 259–cysteine 310, cysteine 352–cysteine 400, cysteine 444–cysteine 500, cysteine 541–cysteine 590, cysteine 633–cysteine 686, cysteine 728–cysteine 783, and cysteine 826–cysteine 884. Fibronectin type-III domains follow at residues proline 907–glutamine 1003, proline 1008–aspartate 1108, proline 1113–aspartate 1211, and alanine 1215–isoleucine 1311. The 89-residue stretch at proline 1312–glutamine 1400 folds into the Ig-like C2-type 9 domain. An intrachain disulfide couples cysteine 1334 to cysteine 1382. 2 Fibronectin type-III domains span residues proline 1402–glutamine 1495 and serine 1496–glycine 1595. Residues leucine 1620–valine 1640 traverse the membrane as a helical segment. Residues cysteine 1641–lysine 2074 lie on the Cytoplasmic side of the membrane. Disordered regions lie at residues glutamate 1739–proline 1766, proline 1778–serine 1917, serine 1936–glutamine 1974, and proline 2011–lysine 2074. Residues threonine 1757–proline 1766 show a composition bias toward basic residues. Polar residues predominate over residues alanine 1831–lysine 1846. Basic residues predominate over residues leucine 1848 to histidine 1858. Polar residues predominate over residues glutamine 1859 to threonine 1868. Low complexity-rich tracts occupy residues asparagine 1875–asparagine 1903, glutamine 1942–glutamine 1974, and serine 2036–proline 2051. The segment covering leucine 2055–phenylalanine 2066 has biased composition (polar residues).

The protein localises to the membrane. In terms of biological role, cell adhesion molecule. This is Cell adhesion molecule Dscam2 (Dscam2) from Drosophila melanogaster (Fruit fly).